The following is a 366-amino-acid chain: Peptide chain release factor 1 (366 aa).

The residue at position 239 (Q239) is an N5-methylglutamine.

It belongs to the prokaryotic/mitochondrial release factor family. In terms of processing, methylated by PrmC. Methylation increases the termination efficiency of RF1.

It is found in the cytoplasm. Peptide chain release factor 1 directs the termination of translation in response to the peptide chain termination codons UAG and UAA. This Albidiferax ferrireducens (strain ATCC BAA-621 / DSM 15236 / T118) (Rhodoferax ferrireducens) protein is Peptide chain release factor 1.